Consider the following 425-residue polypeptide: uncharacterized protein (425 aa).

A run of 12 helical transmembrane segments spans residues 15-35 (LICAFTGFNSGLPLFVLSQML), 48-68 (LIGAVTGVMLPYGLKFLWAPL), 84-104 (MLLSQVALLILLYIISLFDPL), 107-127 (LGTVANIALLIAFFSATQDIV), 149-169 (INAYRIAGLIPGGLSLYLAAI), 174-194 (TVFLWTALCMLAGIFMTLFLA), 225-245 (VIQAIGFLLFLFLYKFGDSFA), 271-291 (ALWSSILSGLAGGMIMLKLGI), 295-315 (LWLFGLVQMVTIGGFIWLAAF), 331-351 (VVIAAEYIGVGLGTAAFVAFM), 370-390 (LSALPSKVLGILSGYVVGAVG), and 395-415 (FWFCLFLAIPGMLCLFWVAPL).

It to E.coli AmpG and yeast YBR220c.

It is found in the cell inner membrane. This is an uncharacterized protein from Haemophilus influenzae (strain ATCC 51907 / DSM 11121 / KW20 / Rd).